An 89-amino-acid polypeptide reads, in one-letter code: Chromosomal protein MC1a (89 aa).

Its function is as follows. Protects DNA against thermal denaturation and modulates transcription. The sequence is that of Chromosomal protein MC1a from Methanothrix soehngenii (Methanosaeta concilii).